The chain runs to 328 residues: Malate dehydrogenase (328 aa).

13–19 serves as a coordination point for NAD(+); it reads GAAGQIS. Residues R94 and R100 each contribute to the substrate site. Residues N107, Q114, and 131–133 each bind NAD(+); that span reads VGN. The substrate site is built by N133 and R164. The active-site Proton acceptor is the H189.

The protein belongs to the LDH/MDH superfamily. MDH type 2 family.

It carries out the reaction (S)-malate + NAD(+) = oxaloacetate + NADH + H(+). Its function is as follows. Catalyzes the reversible oxidation of malate to oxaloacetate. The polypeptide is Malate dehydrogenase (Alcanivorax borkumensis (strain ATCC 700651 / DSM 11573 / NCIMB 13689 / SK2)).